The primary structure comprises 158 residues: Naphthalene 1,2-dioxygenase system, small oxygenase component (158 aa).

This sequence belongs to the bacterial ring-hydroxylating dioxygenase beta subunit family. The naphthalene dioxygenase (NDO) multicomponent enzyme system is composed of an electron transfer component and a dioxygenase component (iron sulfur protein (ISP)). The electron transfer component is composed of a ferredoxin reductase (NdoR) and a ferredoxin (NdoA), and the dioxygenase component is formed of a heterohexamer (trimer of heterodimers) of three large alpha subunits (NdoB) and three small beta subunits (NdoC).

The protein operates within aromatic compound metabolism; naphthalene degradation. Functionally, component of the naphthalene dioxygenase (NDO) multicomponent enzyme system which catalyzes the incorporation of both atoms of molecular oxygen into naphthalene to form cis-(1R,2S)-dihydroxy-1,2-dihydronaphthalene. The beta subunit seems to have a structural role in the holoenzyme. The sequence is that of Naphthalene 1,2-dioxygenase system, small oxygenase component from Pseudomonas fluorescens.